The primary structure comprises 322 residues: uncharacterized protein (322 aa).

The segment covering methionine 1–serine 17 has biased composition (low complexity). Positions methionine 1–leucine 22 are disordered. At alanine 2 the chain carries N-acetylalanine. Position 37 is a phosphoserine (serine 37). The interval alanine 81 to glutamine 104 is disordered. A Phosphoserine modification is found at serine 130. 2 stretches are compositionally biased toward polar residues: residues glutamine 142–alanine 153 and glutamine 161–leucine 177. The tract at residues glutamine 142–alanine 301 is disordered. Phosphoserine is present on serine 176. A compositionally biased stretch (basic and acidic residues) spans alanine 183–proline 203. Residues glutamine 245–alanine 255 show a composition bias toward polar residues.

The protein resides in the cytoplasm. This is an uncharacterized protein from Mus musculus (Mouse).